A 3744-amino-acid polypeptide reads, in one-letter code: SAGA complex/NuA4 acetyltransferase complex subunit TRA1 (3744 aa).

N-acetylserine is present on Ser2. HEAT repeat units follow at residues 2–40 (SLTE…LLNS), 46–92 (FFLQ…NQTF), 94–131 (PYAM…SFKS), and 135–172 (DKLD…DLDS). The tract at residues 2–2598 (SLTEQIEQFA…KPYHTRQISS (2597 aa)) is HEAT. At Ser172 the chain carries Phosphoserine. The span at 185–195 (FSKNDEEKDFP) shows a compositional bias: basic and acidic residues. Residues 185 to 212 (FSKNDEEKDFPSKQSSTEPRFENSTSSN) form a disordered region. Polar residues predominate over residues 196 to 212 (SKQSSTEPRFENSTSSN). HEAT repeat units lie at residues 247–284 (PEFT…ISTE), 319–357 (QDYV…ILST), and 437–477 (KLLL…RFKT). Residues 522–539 (LEPSDDDHLMPQPKKEDI) show a composition bias toward basic and acidic residues. The interval 522 to 546 (LEPSDDDHLMPQPKKEDINDSPDVE) is disordered. At Ser542 the chain carries Phosphoserine. 20 HEAT repeats span residues 588–628 (RTLM…VFSY), 734–771 (PNFA…LSFM), 779–821 (INEV…SIGG), 829–867 (RSIK…TVPV), 870–910 (SVLA…NLTA), 919–958 (PVID…RNRQ), 1074–1112 (NQEN…HFCL), 1188–1225 (SFIP…NVKS), 1283–1320 (KVLE…LTGI), 1369–1408 (TFNE…SEQL), 1435–1472 (NIRI…ENSK), 1476–1512 (ELLQ…LLIA), 1693–1734 (LKLK…RFTE), 1739–1776 (DQNP…SSNK), 1918–1955 (FPIK…VLHE), 2115–2155 (ELGL…LDSE), 2182–2219 (ENLP…AIKA), 2230–2267 (SPGK…FMNF), 2269–2307 (DNIV…ARIT), and 2536–2573 (IISS…SIPK). A head region spans residues 2599–3744 (RTNVINMLLD…RTDVNFMPWF (1146 aa)). Residues 2622-3177 (LVKYLAISYN…HFQLRTTKED (556 aa)) enclose the FAT domain. One can recognise a PI3K/PI4K catalytic domain in the interval 3374-3732 (FLPTVDFVRG…CIGSAVSPRN (359 aa)). Positions 3380–3386 (FVRGTHS) are G-loop. The interval 3563–3571 (MINNRTPHK) is catalytic loop. Residues 3600–3625 (LKNHDLSLPPDSPIFHNNEPVPFRLT) form an activation loop region. Residues 3712–3744 (TPTVTTQFILDCIGSAVSPRNLARTDVNFMPWF) form the FATC domain.

It belongs to the PI3/PI4-kinase family. TRA1 subfamily. In terms of assembly, component of the 1.8 MDa SAGA (Spt-Ada-Gcn5 acetyltransferase) complex, which is composed of 19 subunits TRA1, SPT7, TAF5, NGG1/ADA3, SGF73, SPT20/ADA5, SPT8, TAF12, TAF6, HFI1/ADA1, UBP8, GCN5, ADA2, SPT3, SGF29, TAF10, TAF9, SGF11 and SUS1. The SAGA complex is composed of 4 modules, namely the HAT (histone acetyltransferase) module (GCN5, ADA2, NGG1/ADA3 and SGF29), the DUB (deubiquitinating) module (UBP8, SGF11, SGF73 and SUS1), the core or TAF (TBP-associated factor) module (TAF5, TAF6, TAF9, TAF10 and TAF12), and the Tra1 or SPT (Suppressor of Ty) module (TRA1, HFI1/ADA1, SPT3, SPT7, SPT8 and SPT20/ADA5). The Tra1/SPT module binds activators, the core module recruits TBP (TATA-binding protein), the HAT module contains the histone H3 acetyltransferase GCN5, and the DUB module comprises the histone H2B deubiquitinase UBP8. Also identified in an altered form of SAGA, named SALSA (SAGA altered, Spt8 absent) or SLIK (SAGA-like) complex, which contains a C-terminal truncated form of SPT7 and is missing SPT8. However, it has been shown that the SAGA and SAGA-like SALSA/SLIK transcriptional coactivators are structurally and biochemically equivalent. Component of the NuA4 acetyltransferase complex, which consists of the catalytic subunit ESA1 and the 12 non-catalytic subunits ACT1, ARP4, EAF1/VID21, SWC4/EAF2, EAF3, EAF5, EAF6, EAF7, EPL1, TRA1, YAF9 and YNG2. TRA1 is the scaffold subunit for binding to a variety of transcription activators or transcription factors to recruit NuA4 for targeted gene activation. Identified in the Ada.spt complex with NGG1/ADA3 and SPT7.

The protein localises to the nucleus. In terms of biological role, essential scaffold subunit of the transcription coactivator SAGA complex. SAGA acts as a general cofactor required for essentially all RNA polymerase II transcription. At the promoters, SAGA is required for transcription pre-initiation complex (PIC) recruitment. It influences RNA polymerase II transcriptional activity through different activities such as TBP interaction (via core/TAF module) and promoter selectivity, interaction with transcription activators (via Tra1/SPT module), and chromatin modification through histone acetylation (via HAT module) and deubiquitination (via DUB module). SAGA preferentially acetylates histones H3 (to form H3K9ac, H3K14ac, H3K18ac and H3K23ac) and H2B and deubiquitinates histone H2B. SAGA interacts with DNA via upstream activating sequences (UASs). Also identified in a modified version of SAGA named SALSA or SLIK. The cleavage of SPT7 and the absence of the SPT8 subunit in SLIK neither drive any major conformational differences in its structure compared with SAGA, nor significantly affect HAT, DUB, or DNA-binding activities. Component of the NuA4 histone H4/H2A acetyltransferase involved in transcription and DNA repair. The polypeptide is SAGA complex/NuA4 acetyltransferase complex subunit TRA1 (Saccharomyces cerevisiae (strain ATCC 204508 / S288c) (Baker's yeast)).